Here is a 419-residue protein sequence, read N- to C-terminus: Sulfate adenylyltransferase (419 aa).

This sequence belongs to the sulfate adenylyltransferase family.

The catalysed reaction is sulfate + ATP + H(+) = adenosine 5'-phosphosulfate + diphosphate. Its pathway is sulfur metabolism; hydrogen sulfide biosynthesis; sulfite from sulfate: step 1/3. In Psychrobacter sp. (strain PRwf-1), this protein is Sulfate adenylyltransferase.